Consider the following 214-residue polypeptide: Large ribosomal subunit protein uL4c (214 aa).

The disordered stretch occupies residues K43–G80. Residues G64–G75 show a composition bias toward basic residues.

It belongs to the universal ribosomal protein uL4 family. In terms of assembly, part of the 50S ribosomal subunit.

Its subcellular location is the plastid. It localises to the chloroplast. Its function is as follows. Probably binds the 23S rRNA. This is Large ribosomal subunit protein uL4c (rpl4) from Porphyra purpurea (Red seaweed).